The chain runs to 290 residues: NAD kinase (290 aa).

The active-site Proton acceptor is the Asp72. NAD(+)-binding positions include Asp72–Gly73, Lys77, Asn145–Glu146, Asp175, Thr186–Ser191, and Ala210.

This sequence belongs to the NAD kinase family. Requires a divalent metal cation as cofactor.

Its subcellular location is the cytoplasm. The enzyme catalyses NAD(+) + ATP = ADP + NADP(+) + H(+). Its function is as follows. Involved in the regulation of the intracellular balance of NAD and NADP, and is a key enzyme in the biosynthesis of NADP. Catalyzes specifically the phosphorylation on 2'-hydroxyl of the adenosine moiety of NAD to yield NADP. This is NAD kinase from Bacteroides fragilis (strain ATCC 25285 / DSM 2151 / CCUG 4856 / JCM 11019 / LMG 10263 / NCTC 9343 / Onslow / VPI 2553 / EN-2).